Reading from the N-terminus, the 577-residue chain is Arginine--tRNA ligase (577 aa).

The 'HIGH' region motif lies at 122–132; the sequence is PNVAKEMHVGH.

Belongs to the class-I aminoacyl-tRNA synthetase family. In terms of assembly, monomer.

The protein localises to the cytoplasm. The catalysed reaction is tRNA(Arg) + L-arginine + ATP = L-arginyl-tRNA(Arg) + AMP + diphosphate. This chain is Arginine--tRNA ligase, found in Escherichia coli O157:H7 (strain EC4115 / EHEC).